Here is a 688-residue protein sequence, read N- to C-terminus: Lipase (688 aa).

Residues 1 to 35 (MKTRQNKYSIRKFSVGASSILIAALLFMGGGSAQA) form the signal peptide. The segment at 31-309 (GSAQAAEQQQ…KSAKQKQYKN (279 aa)) is disordered. Positions 36–302 (AEQQQDKGTV…KNEDQTNKSA (267 aa)) are cleaved as a propeptide — removed in mature form. Over residues 45–54 (VENSTTQSIG) the composition is skewed to polar residues. Low complexity predominate over residues 68–79 (NKNVNEKSNVNS). Composition is skewed to basic and acidic residues over residues 84–95 (ESLHNETPKNED) and 103–143 (SQND…KHAS). The span at 144–172 (ENNQTLHSKAAQSNEDVKTKPSQLDNTAA) shows a compositional bias: polar residues. Over residues 173 to 183 (KQEDSQKENLS) the composition is skewed to basic and acidic residues. Residues 184–211 (KQDTQSSKTTDLLRATAQNQSKDSQSTE) show a composition bias toward polar residues. Residues 240-267 (SKEEPLKVDKQANPTTDKDKSSKNDKGS) are compositionally biased toward basic and acidic residues. Residues 274–289 (LESNAVATTNKQSKQQ) are compositionally biased toward polar residues. Serine 418 serves as the catalytic Nucleophile. The Charge relay system role is filled by aspartate 609. Ca(2+) is bound at residue aspartate 647. The Charge relay system role is filled by histidine 648. Ca(2+) is bound by residues aspartate 650, aspartate 655, and aspartate 658.

This sequence belongs to the AB hydrolase superfamily. Lipase family.

The protein localises to the secreted. It carries out the reaction a triacylglycerol + H2O = a diacylglycerol + a fatty acid + H(+). The protein is Lipase (lip) of Staphylococcus epidermidis (strain ATCC 12228 / FDA PCI 1200).